Here is a 260-residue protein sequence, read N- to C-terminus: Thiazole synthase (260 aa).

The Schiff-base intermediate with DXP role is filled by Lys-100. 1-deoxy-D-xylulose 5-phosphate-binding positions include Gly-161, 187-188 (AG), and 209-210 (NT).

It belongs to the ThiG family. In terms of assembly, homotetramer. Forms heterodimers with either ThiH or ThiS.

The protein localises to the cytoplasm. It catalyses the reaction [ThiS sulfur-carrier protein]-C-terminal-Gly-aminoethanethioate + 2-iminoacetate + 1-deoxy-D-xylulose 5-phosphate = [ThiS sulfur-carrier protein]-C-terminal Gly-Gly + 2-[(2R,5Z)-2-carboxy-4-methylthiazol-5(2H)-ylidene]ethyl phosphate + 2 H2O + H(+). It functions in the pathway cofactor biosynthesis; thiamine diphosphate biosynthesis. Catalyzes the rearrangement of 1-deoxy-D-xylulose 5-phosphate (DXP) to produce the thiazole phosphate moiety of thiamine. Sulfur is provided by the thiocarboxylate moiety of the carrier protein ThiS. In vitro, sulfur can be provided by H(2)S. This is Thiazole synthase from Dechloromonas aromatica (strain RCB).